The chain runs to 412 residues: Peptidase T (412 aa).

A Zn(2+)-binding site is contributed by H79. D81 is an active-site residue. Position 142 (D142) interacts with Zn(2+). E176 functions as the Proton acceptor in the catalytic mechanism. Positions 177, 199, and 381 each coordinate Zn(2+).

The protein belongs to the peptidase M20B family. Zn(2+) serves as cofactor.

It is found in the cytoplasm. The enzyme catalyses Release of the N-terminal residue from a tripeptide.. In terms of biological role, cleaves the N-terminal amino acid of tripeptides. In Exiguobacterium sp. (strain ATCC BAA-1283 / AT1b), this protein is Peptidase T.